A 438-amino-acid polypeptide reads, in one-letter code: Trigger factor (438 aa).

Residues Asp-160–Pro-245 enclose the PPIase FKBP-type domain.

This sequence belongs to the FKBP-type PPIase family. Tig subfamily.

The protein resides in the cytoplasm. The enzyme catalyses [protein]-peptidylproline (omega=180) = [protein]-peptidylproline (omega=0). In terms of biological role, involved in protein export. Acts as a chaperone by maintaining the newly synthesized protein in an open conformation. Functions as a peptidyl-prolyl cis-trans isomerase. This is Trigger factor from Francisella tularensis subsp. novicida (strain U112).